The chain runs to 355 residues: tRNA N6-adenosine threonylcarbamoyltransferase (355 aa).

The Fe cation site is built by H110 and H114. Residues 132-136 (LVSGG), D165, G178, D182, and N288 each bind substrate. Residue D316 coordinates Fe cation.

The protein belongs to the KAE1 / TsaD family. Fe(2+) serves as cofactor.

It localises to the cytoplasm. The enzyme catalyses L-threonylcarbamoyladenylate + adenosine(37) in tRNA = N(6)-L-threonylcarbamoyladenosine(37) in tRNA + AMP + H(+). Its function is as follows. Required for the formation of a threonylcarbamoyl group on adenosine at position 37 (t(6)A37) in tRNAs that read codons beginning with adenine. Is involved in the transfer of the threonylcarbamoyl moiety of threonylcarbamoyl-AMP (TC-AMP) to the N6 group of A37, together with TsaE and TsaB. TsaD likely plays a direct catalytic role in this reaction. The chain is tRNA N6-adenosine threonylcarbamoyltransferase from Lawsonia intracellularis (strain PHE/MN1-00).